The following is a 399-amino-acid chain: MPPTSRPVPPPPKRRISESSSSSDDELTGNNSFRENQQRRFRENNEVGNISDSDNDEVFSHQESQSVGFIETDEERQREEHAQNSNLRNRRVSYGKIPVPPMSMTVEDIQEAAKHSREDPSGETVEVRRPNDPRRSSVSLDVFKSFRDPHDKRNMPAKDKTIYVEGPNGKFREMKKGKFWNRDKFDSPKKDAEKKQDEDSVIPFLLKAPGQAYRTQRVYNQIANIIQGFLAGISVMLAIFSFNLEPEVLLTGYRYMSLPIHAGFMVAFTVGLVSAIDRTGIYEVEHFTSRTRLTATVYNNGLITFIVWFVGLVSTLLCIQLESQLAFAPTRIPSEDLVHHWRVFNVLRALTSGLGFLLLAFKPDSDTMAKELREAIYEQLELVTSDPERRRVIITAMKI.

The segment covering 1-11 (MPPTSRPVPPP) has biased composition (pro residues). The disordered stretch occupies residues 1–158 (MPPTSRPVPP…PHDKRNMPAK (158 aa)). Basic and acidic residues-rich tracts occupy residues 36 to 45 (NQQRRFRENN), 111 to 135 (EAAK…DPRR), and 144 to 158 (KSFR…MPAK). 4 consecutive transmembrane segments (helical) span residues 222-242 (IANI…IFSF), 256-276 (MSLP…VSAI), 301-321 (GLIT…CIQL), and 343-363 (VFNV…AFKP).

The protein belongs to the TMEM237 family.

The protein localises to the membrane. The protein resides in the cell projection. It is found in the cilium. In terms of biological role, component of the transition zone in primary cilia. Required for ciliogenesis. The protein is Transmembrane protein 237 homolog of Caenorhabditis elegans.